The sequence spans 139 residues: Probable trafficking protein particle complex subunit 2 (139 aa).

It belongs to the TRAPP small subunits family. Sedlin subfamily. As to quaternary structure, part of the multisubunit TRAPP (transport protein particle) complex.

The protein resides in the cytoplasm. It localises to the perinuclear region. The protein localises to the endoplasmic reticulum. Its subcellular location is the golgi apparatus. In terms of biological role, may play a role in vesicular transport from endoplasmic reticulum to Golgi. Involved in dsRNA uptake. The polypeptide is Probable trafficking protein particle complex subunit 2 (Drosophila melanogaster (Fruit fly)).